Consider the following 182-residue polypeptide: MSYIPELKRRYRDNIVKELVSEFQYKSIMQAPKIEKIVVSMGVGDAVKNKKLLDSAVMELSQITGQKAVKTKAKKAISGFKIRQGQEIGAKVTLRGNMMYEFLYKLVNLALPRVKDFRGINGNAFDGNGNCSFGIAEQIIFSEIDYDKIERISGLNVTIVTTALNDKEGKALLAKFGMPFSN.

It belongs to the universal ribosomal protein uL5 family. Part of the 50S ribosomal subunit; part of the 5S rRNA/L5/L18/L25 subcomplex. Contacts the 5S rRNA and the P site tRNA. Forms a bridge to the 30S subunit in the 70S ribosome.

Its function is as follows. This is one of the proteins that bind and probably mediate the attachment of the 5S RNA into the large ribosomal subunit, where it forms part of the central protuberance. In the 70S ribosome it contacts protein S13 of the 30S subunit (bridge B1b), connecting the 2 subunits; this bridge is implicated in subunit movement. Contacts the P site tRNA; the 5S rRNA and some of its associated proteins might help stabilize positioning of ribosome-bound tRNAs. The polypeptide is Large ribosomal subunit protein uL5 (Borrelia duttonii (strain Ly)).